The following is a 541-amino-acid chain: Membrane protein insertase YidC (541 aa).

A helical transmembrane segment spans residues 7–27; that stretch reads ILLLALALVSFLLFQQWQVET. Polar residues predominate over residues 34–55; the sequence is TVSTVQQTHKNGDVPTSSTANS. The interval 34-59 is disordered; that stretch reads TVSTVQQTHKNGDVPTSSTANSDAPV. The next 4 membrane-spanning stretches (helical) occupy residues 343-363, 418-438, 456-476, and 495-515; these read SFIQSIVGNWGLAIMILTFIV, LGGCLPIVLQMPIFISLYWAL, LSAQDPYYILPLLMGASMFLI, and FIPVMFTVFFLWFPAGLVLYW.

It belongs to the OXA1/ALB3/YidC family. Type 1 subfamily. In terms of assembly, interacts with the Sec translocase complex via SecD. Specifically interacts with transmembrane segments of nascent integral membrane proteins during membrane integration.

It localises to the cell inner membrane. In terms of biological role, required for the insertion and/or proper folding and/or complex formation of integral membrane proteins into the membrane. Involved in integration of membrane proteins that insert both dependently and independently of the Sec translocase complex, as well as at least some lipoproteins. Aids folding of multispanning membrane proteins. This Aliivibrio salmonicida (strain LFI1238) (Vibrio salmonicida (strain LFI1238)) protein is Membrane protein insertase YidC.